The primary structure comprises 237 residues: MIYAEILAGGKGSRMGNVNMPKQFLPLNKRPIIIHTVEKFLLNDRFDKILIVSPKEWINHTKDILKKFIGQDDRLVVVEGGSDRNESIMSGIRYIEKEFGIQDNDVIITHDSVRPFLTHRIIDENIDAVLQYGAVDTVISAIDTIIASEDQEFISDIPVRDNMYQGQTPQSFRISKLVELYNKLSDEQKAVLTDACKICSLAGEKVKLVRGEVFNIKVTTPYDLKVANAILQERISQ.

CTP contacts are provided by residues 7 to 10 (LAGG), 81 to 87 (GSDRNES), and serine 112.

It belongs to the IspD/TarI cytidylyltransferase family. TarI subfamily.

The enzyme catalyses D-ribitol 5-phosphate + CTP + H(+) = CDP-L-ribitol + diphosphate. The protein operates within cell wall biogenesis; poly(ribitol phosphate) teichoic acid biosynthesis. Catalyzes the transfer of the cytidylyl group of CTP to D-ribitol 5-phosphate. In Bacillus spizizenii (strain ATCC 23059 / NRRL B-14472 / W23) (Bacillus subtilis subsp. spizizenii), this protein is Ribitol-5-phosphate cytidylyltransferase.